A 1221-amino-acid polypeptide reads, in one-letter code: Deubiquitinating protein VCPIP1 (1221 aa).

Residues Met-1–Ala-19 are compositionally biased toward pro residues. Positions Met-1–Asp-40 are disordered. The OTU domain occupies Leu-207–Ile-360. Residue Asp-215 is part of the active site. The Nucleophile role is filled by Cys-218. His-353 is a catalytic residue. Position 407 is an N6-acetyllysine (Lys-407). 2 disordered regions span residues Ser-724–Ile-778 and Glu-988–Gly-1009. Residues Ser-746 and Ser-756 each carry the phosphoserine modification. A compositionally biased stretch (low complexity) spans Pro-754–Thr-770. Thr-762 is subject to Phosphothreonine. Ser-767, Ser-993, Ser-997, and Ser-1076 each carry phosphoserine. Disordered stretches follow at residues Ala-1117 to Arg-1177 and Arg-1189 to Ser-1221. Positions Val-1143–Leu-1156 are enriched in polar residues. Low complexity predominate over residues Leu-1162–Thr-1173. Phosphoserine occurs at positions 1197 and 1206. Over residues Met-1198–Asp-1208 the composition is skewed to acidic residues. Residues Ala-1209–Ser-1221 are compositionally biased toward polar residues.

In terms of assembly, binds VCP and the ternary complex containing STX5A, NSFL1C and VCP. In terms of processing, phosphorylated at Ser-1206 by ATM or ATR following induction of covalent DNA-protein cross-links (DPCs). In terms of tissue distribution, widely expressed.

Its subcellular location is the nucleus. The protein resides in the cytoplasm. The protein localises to the endoplasmic reticulum. It localises to the golgi apparatus. It is found in the golgi stack. The enzyme catalyses Thiol-dependent hydrolysis of ester, thioester, amide, peptide and isopeptide bonds formed by the C-terminal Gly of ubiquitin (a 76-residue protein attached to proteins as an intracellular targeting signal).. In terms of biological role, deubiquitinating enzyme involved in DNA repair and reassembly of the Golgi apparatus and the endoplasmic reticulum following mitosis. Necessary for VCP-mediated reassembly of Golgi stacks after mitosis. Plays a role in VCP-mediated formation of transitional endoplasmic reticulum (tER). Mediates dissociation of the ternary complex containing STX5A, NSFL1C and VCP. Also involved in DNA repair following phosphorylation by ATM or ATR: acts by catalyzing deubiquitination of SPRTN, thereby promoting SPRTN recruitment to chromatin and subsequent proteolytic cleavage of covalent DNA-protein cross-links (DPCs). Hydrolyzes 'Lys-11'- and 'Lys-48'-linked polyubiquitin chains. In Rattus norvegicus (Rat), this protein is Deubiquitinating protein VCPIP1.